An 820-amino-acid chain; its full sequence is MDGMLTEGTSAIPPPQPPLEPIERPPTPPPLPPDESALPPPPTDPAPPPPPPDSLAPPPPPEDVPRSTYTVPVVVKKKKVGWGSSKSTTPLSVEELLRKKKEADEAASRPKFLTKSQREKLALEKRAKEIEHERRIRAASTNGSMMSDSNGGGGNSNGRASPTTRYDNVNGSSRTSIPTAPRALRGEIPTAPAAMRSSQAKNNDPRPGNKVPSDSAATGEKRTAPEDAQALLTRQRYMGADQTSSFSAKKKRRRTTERKFNFEWNADEDTSPDYNPLYQNRSEMNFFGRGRLAGFSDDVVDSAAKRYAKALEDRDLEAGSARAREILEMERRRREEGGRNGLDLHWSQKRLDQMRERDWRIFKEDFNISTKGGSIPNPMRSWGESGLPKRLLEIIDKVGYKDPSPIQRAAIPIALQNRDLIGVAVTGSGKTAAFLLPLLVYIAELPRLDEFEWRKSDGPYAIILAPTRELAQQIENEARKFCNPLGFNVVSIVGGHSLEEQSFSLRNGAEIIIATPGRLVDCIERRILVLSQCCYVIMDEADRMIDLGFEEPVNKILDALPVSNEKPDTEEAEDARAMSQHLGGKDRYRQTMMYTATMPSAVERIARKYLRRPAIVTIGNIGEAVDTVEQRVEFISGEDKRKKRLADILASGEFRPPIIVFVNIKRNCDAVARDIKQMGYSSVTLHGSKTQEQREAALASVRNGNTDVLVATDLAGRGIDVPDVSLVVNFNMATNIESYTHRIGRTGRAGKSGVAITFLGNEDADVMYDLKQMLMKSSISRVPEELRKHEAAQSKPTKAGGGQKRLDEGGMSAPKTGSGW.

2 disordered regions span residues 1 to 70 and 101 to 255; these read MDGM…STYT and KEAD…RRRT. The segment covering 12-62 has biased composition (pro residues); that stretch reads IPPPQPPLEPIERPPTPPPLPPDESALPPPPTDPAPPPPPPDSLAPPPPPE. Positions 116 to 136 are enriched in basic and acidic residues; the sequence is SQREKLALEKRAKEIEHERRI. A compositionally biased stretch (polar residues) spans 159–178; it reads RASPTTRYDNVNGSSRTSIP. The short motif at 380-408 is the Q motif element; it reads RSWGESGLPKRLLEIIDKVGYKDPSPIQR. One can recognise a Helicase ATP-binding domain in the interval 411-616; that stretch reads IPIALQNRDL…RKYLRRPAIV (206 aa). 424 to 431 lines the ATP pocket; that stretch reads AVTGSGKT. The DEAD box signature appears at 539-542; that stretch reads DEAD. The Helicase C-terminal domain maps to 627-790; that stretch reads TVEQRVEFIS…RVPEELRKHE (164 aa). The disordered stretch occupies residues 784-820; the sequence is EELRKHEAAQSKPTKAGGGQKRLDEGGMSAPKTGSGW.

This sequence belongs to the DEAD box helicase family. DDX23/PRP28 subfamily. In terms of assembly, component of the U5 snRNP complex.

The protein resides in the cytoplasm. The protein localises to the nucleus. It carries out the reaction ATP + H2O = ADP + phosphate + H(+). In terms of biological role, ATP-dependent RNA helicase involved in mRNA splicing. May destabilize the U1/5'-splice site duplex to permit an effective competition for the 5'-splice site by the U6 snRNA, resulting in the switch between U1 and U6 at the 5'-splice site. May also act to unwind the U4/U6 base-pairing interaction in the U4/U6/U5 snRNP, facilitating the first covalent step of splicing. The polypeptide is Pre-mRNA-splicing ATP-dependent RNA helicase PRP28 (PRP28) (Coccidioides immitis (strain RS) (Valley fever fungus)).